The sequence spans 99 residues: Small ribosomal subunit protein eS24 (99 aa).

The protein belongs to the eukaryotic ribosomal protein eS24 family.

The sequence is that of Small ribosomal subunit protein eS24 from Pyrococcus abyssi (strain GE5 / Orsay).